The sequence spans 230 residues: Orotidine 5'-phosphate decarboxylase (230 aa).

Substrate contacts are provided by residues D10, K32, 59–68 (DLKYHDIPNT), T119, R180, Q189, G209, and R210. Residue K61 is the Proton donor of the active site.

The protein belongs to the OMP decarboxylase family. Type 1 subfamily. In terms of assembly, homodimer.

The enzyme catalyses orotidine 5'-phosphate + H(+) = UMP + CO2. It participates in pyrimidine metabolism; UMP biosynthesis via de novo pathway; UMP from orotate: step 2/2. Its function is as follows. Catalyzes the decarboxylation of orotidine 5'-monophosphate (OMP) to uridine 5'-monophosphate (UMP). This Haemophilus ducreyi (strain 35000HP / ATCC 700724) protein is Orotidine 5'-phosphate decarboxylase.